Reading from the N-terminus, the 581-residue chain is ATP-dependent lipid A-core flippase (581 aa).

5 helical membrane passes run 27 to 47 (VFLAVIGMVGTAATEPVFPAI), 63 to 83 (MVWLIPMGIVTLFLVRSVIVY), 154 to 174 (IALIGYLLYLDWKLTLITLAI), 251 to 271 (MTPITHIAASVAVAIIAFLAL), and 279 to 299 (GASAGSFISFITAMLMLISPV). The 284-residue stretch at 28–311 (FLAVIGMVGT…LATVNPTIQR (284 aa)) folds into the ABC transmembrane type-1 domain. In terms of domain architecture, ABC transporter spans 343-579 (ICFDNVSLRY…GSYYANLSRL (237 aa)). Position 377 to 384 (377 to 384 (GASGGGKS)) interacts with ATP.

It belongs to the ABC transporter superfamily. Lipid exporter (TC 3.A.1.106) family. In terms of assembly, homodimer.

It localises to the cell inner membrane. The enzyme catalyses ATP + H2O + lipid A-core oligosaccharideSide 1 = ADP + phosphate + lipid A-core oligosaccharideSide 2.. Functionally, involved in lipopolysaccharide (LPS) biosynthesis. Translocates lipid A-core from the inner to the outer leaflet of the inner membrane. Transmembrane domains (TMD) form a pore in the inner membrane and the ATP-binding domain (NBD) is responsible for energy generation. This chain is ATP-dependent lipid A-core flippase, found in Albidiferax ferrireducens (strain ATCC BAA-621 / DSM 15236 / T118) (Rhodoferax ferrireducens).